We begin with the raw amino-acid sequence, 131 residues long: Mediator of RNA polymerase II transcription subunit 31 (131 aa).

Ala2 bears the N-acetylalanine mark.

It belongs to the Mediator complex subunit 31 family. As to quaternary structure, component of the Mediator complex, which is composed of MED1, MED4, MED6, MED7, MED8, MED9, MED10, MED11, MED12, MED13, MED13L, MED14, MED15, MED16, MED17, MED18, MED19, MED20, MED21, MED22, MED23, MED24, MED25, MED26, MED27, MED29, MED30, MED31, CCNC, CDK8 and CDC2L6/CDK11. The MED12, MED13, CCNC and CDK8 subunits form a distinct module termed the CDK8 module. Mediator containing the CDK8 module is less active than Mediator lacking this module in supporting transcriptional activation. Individual preparations of the Mediator complex lacking one or more distinct subunits have been variously termed ARC, CRSP, DRIP, PC2, SMCC and TRAP.

Its subcellular location is the nucleus. In terms of biological role, component of the Mediator complex, a coactivator involved in the regulated transcription of nearly all RNA polymerase II-dependent genes. Mediator functions as a bridge to convey information from gene-specific regulatory proteins to the basal RNA polymerase II transcription machinery. Mediator is recruited to promoters by direct interactions with regulatory proteins and serves as a scaffold for the assembly of a functional preinitiation complex with RNA polymerase II and the general transcription factors. This is Mediator of RNA polymerase II transcription subunit 31 (MED31) from Homo sapiens (Human).